A 349-amino-acid polypeptide reads, in one-letter code: Nicotinate-nucleotide--dimethylbenzimidazole phosphoribosyltransferase (349 aa).

The active-site Proton acceptor is the E316.

It belongs to the CobT family.

The catalysed reaction is 5,6-dimethylbenzimidazole + nicotinate beta-D-ribonucleotide = alpha-ribazole 5'-phosphate + nicotinate + H(+). The protein operates within nucleoside biosynthesis; alpha-ribazole biosynthesis; alpha-ribazole from 5,6-dimethylbenzimidazole: step 1/2. Its function is as follows. Catalyzes the synthesis of alpha-ribazole-5'-phosphate from nicotinate mononucleotide (NAMN) and 5,6-dimethylbenzimidazole (DMB). The chain is Nicotinate-nucleotide--dimethylbenzimidazole phosphoribosyltransferase from Photorhabdus laumondii subsp. laumondii (strain DSM 15139 / CIP 105565 / TT01) (Photorhabdus luminescens subsp. laumondii).